The chain runs to 1452 residues: Pleiotropic drug resistance protein 1 (1452 aa).

The ABC transporter 1 domain maps to 152-425; the sequence is LNYLHILPNR…FEYMGFICPE (274 aa). An ATP-binding site is contributed by 185 to 192; the sequence is GPPSSGKT. One can recognise an ABC transmembrane type-2 1 domain in the interval 504–716; sequence LLKACTAREY…AQNAIAVNEF (213 aa). 7 helical membrane passes run 521–541, 554–574, 609–629, 640–660, 664–684, 694–714, and 753–773; these read FVYI…MTLF, GAVF…NGFS, IPIT…VIGF, LLLL…MGAL, IIVA…MGGF, WWIW…IAVN, and IGAG…AVAL. The tract at residues 808-830 is disordered; sequence LGKSSSEKGNDVRRSASSRSMSS. Basic and acidic residues predominate over residues 812–821; that stretch reads SSEKGNDVRR. The ABC transporter 2 domain maps to 855–1107; sequence ITFDDIRYAV…HLIKYFEGID (253 aa). 900–907 is a binding site for ATP; it reads GVSGAGKT. The ABC transmembrane type-2 2 domain occupies 1180–1394; it reads TQCMACFWKQ…TLYGLIASQF (215 aa). A run of 7 helical transmembrane segments spans residues 1199–1219, 1239–1259, 1287–1307, 1314–1334, 1344–1364, 1375–1395, and 1421–1441; these read YTAV…TIFW, YIAV…VIAI, LPYL…MIGF, FFWY…YGMM, IAAI…GFIV, WYYY…SQFG, and FVGY…FIFA.

Belongs to the ABC transporter superfamily. ABCG family. PDR (TC 3.A.1.205) subfamily. In terms of tissue distribution, expressed in root hypodermal passage cells. Expressed in stem tissues, particularly the vasculature and nodes adjacent to leaf axils.

Its subcellular location is the cell membrane. In terms of biological role, cellular strigolactone (SL) transporter required for the exudation of SL from the root to the soil. The presence of SL in the vicinity of the roots is required for development of symbiotic interactions with arbuscular mycorrhizal fungi (AMF). Transports SL in the above ground tissues and is required for the control of shoot branching. SL regulates plant shoot architecture by inhibiting the outgrowth of axillary buds. Involved in the regulation of shootward and outward directional strigolactone transport in roots. Due to its polar localization in root cells, mediates directional shootward strigolactone transport, as well as localized outward directional transport for exudation to the soil. This is Pleiotropic drug resistance protein 1 from Petunia hybrida (Petunia).